The sequence spans 468 residues: Tissue alpha-L-fucosidase (468 aa).

Positions 1–29 are cleaved as a signal peptide; sequence MRAPGERWRPAGAALWLLLLLLLLGATES. Thr-172 is subject to Phosphothreonine. Residues Asn-243, Asn-270, and Asn-384 are each glycosylated (N-linked (GlcNAc...) asparagine).

The protein belongs to the glycosyl hydrolase 29 family. In terms of assembly, homotetramer.

The protein localises to the lysosome. It carries out the reaction an alpha-L-fucoside + H2O = L-fucose + an alcohol. The catalysed reaction is a neolactoside IV(2)-alpha-Fuc-nLc4Cer(d18:1(4E)) + H2O = a neolactoside nLc4Cer(d18:1(4E)) + L-fucose. The enzyme catalyses a neolactoside IV(2)-alpha-Fuc-nLc4Cer(d18:0) + H2O = a neolactoside nLc4Cer(d18:0) + L-fucose. Its function is as follows. Alpha-L-fucosidase is responsible for hydrolyzing the alpha-1,6-linked fucose joined to the reducing-end N-acetylglucosamine of the carbohydrate moieties of glycoproteins. The sequence is that of Tissue alpha-L-fucosidase (FUCA1) from Macaca fascicularis (Crab-eating macaque).